The primary structure comprises 601 residues: Sulfite reductase [NADPH] flavoprotein alpha-component (601 aa).

The region spanning 64–202 (ITLISASQTG…AAQEWRARVV (139 aa)) is the Flavodoxin-like domain. FMN is bound by residues 70 to 75 (SQTGNA), 117 to 120 (STQG), and 153 to 162 (LGDTSYEFFC). The 215-residue stretch at 236–450 (EAPLSASLAV…IEHNDNFRLP (215 aa)) folds into the FAD-binding FR-type domain. Residues T324, A358, 388–391 (RLYS), 406–408 (TVG), Y412, and 421–424 (GGAS) contribute to the FAD site. Residues 521-522 (SR), 527-531 (KIYVQ), and D563 contribute to the NADP(+) site. Residue Y601 participates in FAD binding.

The protein belongs to the NADPH-dependent sulphite reductase flavoprotein subunit CysJ family. This sequence in the N-terminal section; belongs to the flavodoxin family. In the C-terminal section; belongs to the flavoprotein pyridine nucleotide cytochrome reductase family. In terms of assembly, alpha(8)-beta(8). The alpha component is a flavoprotein, the beta component is a hemoprotein. The cofactor is FAD. FMN is required as a cofactor.

The catalysed reaction is hydrogen sulfide + 3 NADP(+) + 3 H2O = sulfite + 3 NADPH + 4 H(+). The protein operates within sulfur metabolism; hydrogen sulfide biosynthesis; hydrogen sulfide from sulfite (NADPH route): step 1/1. Functionally, component of the sulfite reductase complex that catalyzes the 6-electron reduction of sulfite to sulfide. This is one of several activities required for the biosynthesis of L-cysteine from sulfate. The flavoprotein component catalyzes the electron flow from NADPH -&gt; FAD -&gt; FMN to the hemoprotein component. The chain is Sulfite reductase [NADPH] flavoprotein alpha-component from Citrobacter koseri (strain ATCC BAA-895 / CDC 4225-83 / SGSC4696).